The sequence spans 250 residues: 3-deoxy-manno-octulosonate cytidylyltransferase (250 aa).

This sequence belongs to the KdsB family.

The protein resides in the cytoplasm. The catalysed reaction is 3-deoxy-alpha-D-manno-oct-2-ulosonate + CTP = CMP-3-deoxy-beta-D-manno-octulosonate + diphosphate. Its pathway is nucleotide-sugar biosynthesis; CMP-3-deoxy-D-manno-octulosonate biosynthesis; CMP-3-deoxy-D-manno-octulosonate from 3-deoxy-D-manno-octulosonate and CTP: step 1/1. The protein operates within bacterial outer membrane biogenesis; lipopolysaccharide biosynthesis. Its function is as follows. Activates KDO (a required 8-carbon sugar) for incorporation into bacterial lipopolysaccharide in Gram-negative bacteria. This is 3-deoxy-manno-octulosonate cytidylyltransferase from Legionella pneumophila (strain Paris).